The sequence spans 660 residues: RalBP1-associated Eps domain-containing protein 2 (660 aa).

The EH 1 domain maps to 34–147; it reads EQQCYSELFA…RFMMSKNDGE (114 aa). The tract at residues 169 to 208 is disordered; that stretch reads EKNSFKRMDDEDKQQETQSPTMSPLASPPSSPPHYQRVPL. Ser-254 is modified (phosphoserine). Residues 282 to 373 form the EH 2 domain; sequence QREYYVNQFR…LQPEYLQAAF (92 aa). The EF-hand domain occupies 315-350; sequence LSIPELSYIWELSDADCDGALTLPEFCAAFHLIVAR. Asp-328, Asp-330, Asp-332, and Glu-339 together coordinate Ca(2+). Residues 433-616 are disordered; sequence NEALPKDVSE…KQKKAIQTAI (184 aa). Thr-479 is subject to Phosphothreonine. Ser-493 is modified (phosphoserine). The span at 512 to 523 shows a compositional bias: pro residues; sequence LPPPPALPPRPC. The segment at 514–660 is interaction with RALBP1; that stretch reads PPPALPPRPC…LEQLRPVTVL (147 aa). Residues 561-660 form an interaction with ASAP1 region; the sequence is PPSKPIRRKF…LEQLRPVTVL (100 aa). A compositionally biased stretch (low complexity) spans 582–594; that stretch reads PSTAASGPASAAT. Residues 601 to 657 are a coiled coil; it reads VQKQSSKQKKAIQTAIRKNKEANAVLARLNSELQQQLKEVHQERIALENQLEQLRPV.

Interacts with EPN1; the interaction is direct. Interacts with EPS15; the interaction is direct. Interacts with EPS15L1. Interacts with RALBP1; can form a ternary complex with activated Ral (RALA or RALB). Interacts with ASAP1; the interaction is direct and this complex can bind paxillin. Also forms a ternary complex with RALBP1 and ASAP1. Interacts with GRB2. In terms of processing, tyrosine-phosphorylated upon stimulation of cells with EGF. Phosphorylation on Tyr-residues induces its association with the EGF receptor probably indirectly through an adapter like GRB2. In terms of tissue distribution, expressed at high levels in the cerebrum, cerebellum, lung, kidney, and testis. Weakly expressed in the kidney. Isoform 2 is down-regulated during progression of prostate cancer.

It localises to the cytoplasm. In terms of biological role, involved in ligand-dependent receptor mediated endocytosis of the EGF and insulin receptors as part of the Ral signaling pathway. By controlling growth factor receptors endocytosis may regulate cell survival. Through ASAP1 may regulate cell adhesion and migration. This chain is RalBP1-associated Eps domain-containing protein 2 (REPS2), found in Homo sapiens (Human).